A 106-amino-acid polypeptide reads, in one-letter code: MYLPWGVVLAGGANGFGAGAYQTGTICEVSTQIAVRLPDEIVAFIDDEVRGQHARSRAAVVLRALERERRRRLAERDAEILATNTSATGDLDTLAGHCARTALDID.

Forms a complex with cognate toxin MazF3, possibly with 1:1 stoichiometry.

Functionally, antitoxin component of a type II toxin-antitoxin (TA) system. Upon expression in E.coli and M.smegmatis neutralizes the effect of cognate toxin MazF3. Overexpression of MazE3 alone decreased persister cells formation in M.smegmatis upon challenge with gentamicin or kanamycin. This is Antitoxin MazE3 (mazE3) from Mycobacterium tuberculosis (strain ATCC 25618 / H37Rv).